Here is a 387-residue protein sequence, read N- to C-terminus: Eukaryotic translation initiation factor 3 subunit M (387 aa).

In terms of domain architecture, PCI spans 181–340 (LSSKVMIELL…RKVHISSTMH (160 aa)).

It belongs to the eIF-3 subunit M family. In terms of assembly, component of the eukaryotic translation initiation factor 3 (eIF-3) complex. The eIF-3 complex interacts with pix.

It localises to the cytoplasm. The protein resides in the golgi apparatus. Component of the eukaryotic translation initiation factor 3 (eIF-3) complex, which is involved in protein synthesis of a specialized repertoire of mRNAs and, together with other initiation factors, stimulates binding of mRNA and methionyl-tRNAi to the 40S ribosome. The eIF-3 complex specifically targets and initiates translation of a subset of mRNAs involved in cell proliferation. This is Eukaryotic translation initiation factor 3 subunit M from Drosophila ananassae (Fruit fly).